The sequence spans 491 residues: MNQVFKGWSRGMSTSRGRSMRSKVESRMRKESGKTLREIRRAKKLKKKLMTDEERLIYNLKRAKKKVALLLQKLKKYDLPELPSPVHDPELFTSEQVQAFKKIGFKNKNYVPVGVRGVFGGVVQNMHMHWKFHETVQVCCDNFPKEKIKEMASMIARLSGGVVINIHNVKTIIMFRGRNYRQPKNLIPVNTLTKRKALFKARFEQALESQKLNIKKTEQQLRRMGVNPEDPVAMASIHRVASTFFNAIDKKEGTPYVFHGDKQSERGTSVDNREESEPGDEDSDQEELDRFIAEIEEAADKEWEEEEAAEQEESGRIRYWNREEFAGRSRTPELRSYGDASHGFRRNDRDTHSQRRPNDSDDDDDDGELDSEDDEIPKRFDRARSSNTNTRRPREDFKRRSPDPRPRPRAQVRSDDDVLSDLDNTMWDSEDEEDAPPANYISSSDDDEDENRTVSASSSKQSRFRNNSSRDGINNSKSKSGKQRDEDWDSD.

The transit peptide at M1–E25 directs the protein to the mitochondrion. The tract at residues M1–K34 is disordered. The span at S22–K34 shows a compositional bias: basic and acidic residues. The CRM domain maps to E90–I187. Residues P255–E265 show a composition bias toward basic and acidic residues. Disordered stretches follow at residues P255–E287 and R328–D491. Positions E277–E287 are enriched in acidic residues. Positions R345–D359 are enriched in basic and acidic residues. The span at S360–E375 shows a compositional bias: acidic residues. Residues R392–D416 show a composition bias toward basic and acidic residues. Residues T453 to S478 are compositionally biased toward polar residues.

In terms of tissue distribution, highly expressed in roots and meristemic regions of young seedlings. Expressed at low levels in stems, trichomes and stigma.

It localises to the mitochondrion. In terms of biological role, involved in the splicing of group II introns in mitochondria. Required for the splicing of mitochondrial introns found in nad1, nad2, nad4, nad5, nad7, rps3 and cox2 genes. Splicing of mitochondrial introns is crucial for mitochondrial biogenesis and function, plant growth and development, and plant response to abiotic stresses. The polypeptide is CRM-domain containing factor CFM9, mitochondrial (Arabidopsis thaliana (Mouse-ear cress)).